Reading from the N-terminus, the 148-residue chain is Cytochrome c-552 (148 aa).

The first 17 residues, 1 to 17 (MKRTLMAFLLLGGLALA), serve as a signal peptide directing secretion. Q18 is modified (pyrrolidone carboxylic acid). Heme c contacts are provided by C28, C31, H32, and M86.

In terms of processing, binds 1 heme c group covalently per subunit.

Its function is as follows. This monoheme basic protein appears to function as an electron donor to cytochrome oxidase in T.thermophilus. This chain is Cytochrome c-552 (cycA), found in Thermus thermophilus (strain ATCC 27634 / DSM 579 / HB8).